An 87-amino-acid polypeptide reads, in one-letter code: Retinal rod rhodopsin-sensitive cGMP 3',5'-cyclic phosphodiesterase subunit gamma (87 aa).

At methionine 1 the chain carries N-acetylmethionine. Basic and acidic residues predominate over residues 1-12 (MNLEPPKAEIRS). Residues 1 to 55 (MNLEPPKAEIRSATRVMGGPVTPRKGPPKFKQRQTRQFKSKPPKKGVQGFGDDIP) are disordered. Over residues 26-44 (GPPKFKQRQTRQFKSKPPK) the composition is skewed to basic residues.

It belongs to the rod/cone cGMP-PDE gamma subunit family. In terms of assembly, oligomer composed of two catalytic chains (alpha and beta), an inhibitory chain (gamma) and the delta chain.

The catalysed reaction is 3',5'-cyclic GMP + H2O = GMP + H(+). Participates in processes of transmission and amplification of the visual signal. cGMP-PDEs are the effector molecules in G-protein-mediated phototransduction in vertebrate rods and cones. The polypeptide is Retinal rod rhodopsin-sensitive cGMP 3',5'-cyclic phosphodiesterase subunit gamma (PDE6G) (Bos taurus (Bovine)).